The sequence spans 249 residues: Adenosylcobinamide-GDP ribazoletransferase (249 aa).

The next 7 helical transmembrane spans lie at 29–49 (LYWF…CAWL), 50–70 (PLSI…GFIV), 104–124 (VGSF…VAIL), 131–151 (AFAL…LLAA), 165–185 (GFVG…SLMM), 194–214 (PFLL…IGFL), and 226–246 (VLGA…GVAF).

This sequence belongs to the CobS family. Requires Mg(2+) as cofactor.

The protein localises to the cell inner membrane. The enzyme catalyses alpha-ribazole + adenosylcob(III)inamide-GDP = adenosylcob(III)alamin + GMP + H(+). It catalyses the reaction alpha-ribazole 5'-phosphate + adenosylcob(III)inamide-GDP = adenosylcob(III)alamin 5'-phosphate + GMP + H(+). Its pathway is cofactor biosynthesis; adenosylcobalamin biosynthesis; adenosylcobalamin from cob(II)yrinate a,c-diamide: step 7/7. Joins adenosylcobinamide-GDP and alpha-ribazole to generate adenosylcobalamin (Ado-cobalamin). Also synthesizes adenosylcobalamin 5'-phosphate from adenosylcobinamide-GDP and alpha-ribazole 5'-phosphate. The sequence is that of Adenosylcobinamide-GDP ribazoletransferase from Chlorobium phaeovibrioides (strain DSM 265 / 1930) (Prosthecochloris vibrioformis (strain DSM 265)).